A 270-amino-acid chain; its full sequence is Formamidopyrimidine-DNA glycosylase (270 aa).

The Schiff-base intermediate with DNA role is filled by proline 2. Glutamate 3 functions as the Proton donor in the catalytic mechanism. The active-site Proton donor; for beta-elimination activity is lysine 58. The DNA site is built by histidine 92, arginine 111, and arginine 153. The FPG-type zinc-finger motif lies at 238–270 (SVYGASVCPVCGGALRQIRLAQRGTWFCPRCQR). Arginine 260 (proton donor; for delta-elimination activity) is an active-site residue.

The protein belongs to the FPG family. As to quaternary structure, monomer. It depends on Zn(2+) as a cofactor.

The catalysed reaction is Hydrolysis of DNA containing ring-opened 7-methylguanine residues, releasing 2,6-diamino-4-hydroxy-5-(N-methyl)formamidopyrimidine.. It carries out the reaction 2'-deoxyribonucleotide-(2'-deoxyribose 5'-phosphate)-2'-deoxyribonucleotide-DNA = a 3'-end 2'-deoxyribonucleotide-(2,3-dehydro-2,3-deoxyribose 5'-phosphate)-DNA + a 5'-end 5'-phospho-2'-deoxyribonucleoside-DNA + H(+). Functionally, involved in base excision repair of DNA damaged by oxidation or by mutagenic agents. Acts as a DNA glycosylase that recognizes and removes damaged bases. Has a preference for oxidized purines, such as 7,8-dihydro-8-oxoguanine (8-oxoG). Has AP (apurinic/apyrimidinic) lyase activity and introduces nicks in the DNA strand. Cleaves the DNA backbone by beta-delta elimination to generate a single-strand break at the site of the removed base with both 3'- and 5'-phosphates. This is Formamidopyrimidine-DNA glycosylase from Halorhodospira halophila (strain DSM 244 / SL1) (Ectothiorhodospira halophila (strain DSM 244 / SL1)).